Consider the following 395-residue polypeptide: Succinyl-diaminopimelate desuccinylase (395 aa).

His74 serves as a coordination point for Zn(2+). Asp76 is an active-site residue. Asp107 is a Zn(2+) binding site. Glu141 functions as the Proton acceptor in the catalytic mechanism. 3 residues coordinate Zn(2+): Glu142, Glu170, and His368.

This sequence belongs to the peptidase M20A family. DapE subfamily. Homodimer. Zn(2+) serves as cofactor. Co(2+) is required as a cofactor.

It catalyses the reaction N-succinyl-(2S,6S)-2,6-diaminopimelate + H2O = (2S,6S)-2,6-diaminopimelate + succinate. It participates in amino-acid biosynthesis; L-lysine biosynthesis via DAP pathway; LL-2,6-diaminopimelate from (S)-tetrahydrodipicolinate (succinylase route): step 3/3. In terms of biological role, catalyzes the hydrolysis of N-succinyl-L,L-diaminopimelic acid (SDAP), forming succinate and LL-2,6-diaminopimelate (DAP), an intermediate involved in the bacterial biosynthesis of lysine and meso-diaminopimelic acid, an essential component of bacterial cell walls. This is Succinyl-diaminopimelate desuccinylase from Brucella melitensis biotype 1 (strain ATCC 23456 / CCUG 17765 / NCTC 10094 / 16M).